We begin with the raw amino-acid sequence, 189 residues long: Cytidylate kinase (189 aa).

ATP is bound at residue 7-15 (GPPGSGKTS).

Belongs to the cytidylate kinase family. Type 2 subfamily.

Its subcellular location is the cytoplasm. It carries out the reaction CMP + ATP = CDP + ADP. The catalysed reaction is dCMP + ATP = dCDP + ADP. The protein is Cytidylate kinase of Saccharolobus islandicus (strain Y.N.15.51 / Yellowstone #2) (Sulfolobus islandicus).